The sequence spans 66 residues: Large ribosomal subunit protein uL29 (66 aa).

Belongs to the universal ribosomal protein uL29 family.

This is Large ribosomal subunit protein uL29 from Bartonella henselae (strain ATCC 49882 / DSM 28221 / CCUG 30454 / Houston 1) (Rochalimaea henselae).